Here is a 1009-residue protein sequence, read N- to C-terminus: MDFYNPYLSKKPTDTKTPKLHTTRQSICRLVPKCFRNPTEKGVVSVSSFALPTYFFKGNENKVYLENGKSMWHLRRPCKNALLEEQSITFHIYDIVETTYSEDRCNDIPFKFQTDIIPNGTVLKLLGRTLEGASVCVNVFGQRNYFYVKVPEGGNITYLIKQALNEKFSPSCAYQTEAVKKKILSRYDPEEHDVFKVTVSSSLSVYKISDSLVSNGCEVFETNVDAIRRFVIDNDFSTFGWYTCKSACPRITNRDSHTDIEFDCGYYDLEFHADRTEWPPYNIMSFDIECIGEKGFPCAKNEGDLIIQISCVFWHAGALDTTRNMLLSLGTCSAVENTEVYEFPSEIDMLHGFFSLIRDFNVEIITGYNISNFDLPYLIDRATQIYNIKLSDYSRVKTGSIFQVHTPKDTGNGFMRSVSKIKISGIIAIDMYIVCKDKLSLSNYKLDTVANHCIGAKKEDVSYKDIMPLFMSGPEGRAKIGLYCVIDSVLVMKLLKFFMIHVEISEIAKLAKIPTRRVLTDGQQIRVFSCLLAAARAENYILPVSNDVNADGFQGATVINPIPGFYNNAVLVVDFASLYPSIIQAHNLCYSTLIPHHALHNYPHLKSSDYETFMLSSGPIHFVKKHIQASLLSRLLTVWLSKRKAIRQKLAECEDLDTKTILDKQQLAIKVTCNAVYGFTGVASGLLPCISIAETVTLQGRTMLEKSKIFIEAMTPDTLQEIVPHIVKHEPDAKFRVIYGDTDSLFVECVGYSVDTVVKFGDFLAAFTSEKLFNAPIKLESEKTFQCLLLLAKKRYIGILSNDKLLMKGVDLVRKTACKFVQNTSSKILNLILKDPEVKAAAQLLSTKDPDYAFREGLPDGFLKVIDILNESHKNLRTGQVPVEELTFSTELSRPISSYKTENLPHLTVYKKIITRHEEPPQVHDRIPYVFVGKTTSCISNMAEDPTYTVQNNIPIAVDLYFDKLIHGVANIIQCLFKDSSKTVSVLYNFVSTPVLFSYELLTDHSVKA.

This sequence belongs to the DNA polymerase type-B family.

It is found in the host nucleus. It carries out the reaction DNA(n) + a 2'-deoxyribonucleoside 5'-triphosphate = DNA(n+1) + diphosphate. This chain is DNA polymerase catalytic subunit (9), found in Saimiri sciureus (Common squirrel monkey).